Here is a 407-residue protein sequence, read N- to C-terminus: Aminomethyltransferase, mitochondrial (407 aa).

The N-terminal 29 residues, 1-29, are a transit peptide targeting the mitochondrion; it reads MRGGLWQVGQSITRRLGQSDKKTIVRRWY. Substrate contacts are provided by Glu234, Arg265, and Tyr403.

The protein belongs to the GcvT family. As to quaternary structure, the glycine cleavage system is composed of four proteins: P, T, L and H.

It is found in the mitochondrion. It catalyses the reaction N(6)-[(R)-S(8)-aminomethyldihydrolipoyl]-L-lysyl-[protein] + (6S)-5,6,7,8-tetrahydrofolate = N(6)-[(R)-dihydrolipoyl]-L-lysyl-[protein] + (6R)-5,10-methylene-5,6,7,8-tetrahydrofolate + NH4(+). The glycine cleavage system catalyzes the degradation of glycine. The polypeptide is Aminomethyltransferase, mitochondrial (GDCST) (Flaveria trinervia (Clustered yellowtops)).